The primary structure comprises 815 residues: Serotype-specific mannosyltransferase WbdA (815 aa).

The segment at 1–374 (MSRAIIENAG…WANTAHLAID (374 aa)) is alpha-(1-&gt;2)-mannosyltransferase. The alpha-(1-&gt;3)-mannosyltransferase stretch occupies residues 431-804 (KLLVDISVLA…WKQSAELLLK (374 aa)).

It belongs to the glycosyltransferase group 1 family. Glycosyltransferase 4 subfamily.

It is found in the cell inner membrane. The protein operates within bacterial outer membrane biogenesis; LPS O-antigen biosynthesis. Functionally, mannosyltransferase involved in the biosynthesis of the repeat unit of the lipopolysaccharide (LPS) O-antigen region. The protein is Serotype-specific mannosyltransferase WbdA of Escherichia coli.